The chain runs to 336 residues: MRTETASLLLLAALSVAEELTPNDVPLACANMCGPIVELSYKCDVDGTDELRKLKRRKLFSPQQQQQQQQQQQQSAPKAKRQADPEPQAPAPVPSSTNNQQAADVIFIPGSIGKFKTIPTPLPPADTGVPSMAVTPAAPAPTLPVLDLRPTTTPTNLNPNLPILATPILPSVPASTPLATASSTQVPLPVGNEADAGDGVDAGPAPSNSLNGNVGDMVDDAGNLWPGQKGRQAASDLETACICSNTSFNVRRVAGLCGDCLEQVSGDQGPMRAILASCNFTTERYEPEKESLVANVRVEATKPSFTQTAAASYSWRVSGPTWAVVVGAGMLLGMGW.

Residues 1–19 (MRTETASLLLLAALSVAEE) form the signal peptide. 2 disordered regions span residues 59-99 (LFSP…STNN) and 189-230 (PVGN…GQKG). Residues 63 to 74 (QQQQQQQQQQQQ) are compositionally biased toward low complexity.

As to quaternary structure, interacts with A.thaliana CBP60G; the interaction is direct. Interacts with A.thaliana SARD1. Interacts with G.hirsutum CBP60B.

It is found in the secreted. Its subcellular location is the host nucleus. Effector that binds transcription regulators in the host plant to suppress the host's innate immune response. Inhibits the host plant transcription regulators CBP60G and SARD1. The sequence is that of Effector SCP41 from Verticillium dahliae (strain VdLs.17 / ATCC MYA-4575 / FGSC 10137) (Verticillium wilt).